The chain runs to 265 residues: Gamma-secretase subunit APH-1A (265 aa).

Residues 1-2 (MG) are Lumenal-facing. A helical membrane pass occupies residues 3–23 (AAVFFGCTFVAFGPAFSLFLI). At 24–31 (TVAGDPLR) the chain is on the cytoplasmic side. Residues 32–52 (VIILVAGAFFWLVSLLLASVV) traverse the membrane as a helical segment. Residues 53-68 (WFILVHVTDRSDARLQ) are Lumenal-facing. The chain crosses the membrane as a helical span at residues 69 to 89 (YGLLIFGAAVSVLLQEVFRFA). Residues 90–118 (YYKLLKKADEGLASLSEDGRSPISIRQMA) are Cytoplasmic-facing. The chain crosses the membrane as a helical span at residues 119–139 (YVSGLSFGIISGVFSVINILA). The Lumenal segment spans residues 140 to 158 (DALGPGVVGIHGDSPYYFL). A helical membrane pass occupies residues 159 to 179 (TSAFLTAAIILLHTFWGVVFF). Residues 180–186 (DACERRR) are Cytoplasmic-facing. The helical transmembrane segment at 187 to 207 (YWALGLVVGSHLLTSGLTFLN) threads the bilayer. The Lumenal segment spans residues 208-213 (PWYEAS). The chain crosses the membrane as a helical span at residues 214–234 (LLPIYAVTVSMGLWAFITAGG). Over 235 to 265 (SLRSIQRSLSCRRQEDSRVMVYSALRIPPED) the chain is Cytoplasmic.

Belongs to the APH-1 family. In terms of assembly, the functional gamma-secretase complex is composed of at least four polypeptides: a presenilin homodimer (PSEN1 or PSEN2), nicastrin (NCSTN), APH1 (APH1A or APH1B) and PSENEN/PEN2.

It localises to the endoplasmic reticulum membrane. It is found in the golgi apparatus. Its subcellular location is the golgi stack membrane. Its function is as follows. Non-catalytic subunit of the gamma-secretase complex, an endoprotease complex that catalyzes the intramembrane cleavage of integral membrane proteins such as Notch receptors and APP (amyloid-beta precursor protein). Required for normal gamma-secretase assembly. The gamma-secretase complex plays a role in Notch and Wnt signaling cascades and regulation of downstream processes via its role in processing key regulatory proteins, and by regulating cytosolic CTNNB1 levels. The chain is Gamma-secretase subunit APH-1A (Aph1a) from Mus musculus (Mouse).